A 593-amino-acid chain; its full sequence is Putative auxin response factor 15 (593 aa).

The segment at residues 126-228 is a DNA-binding region (TF-B3); sequence FTKVLTASDI…ELRVGIRRAR (103 aa). The PB1 domain occupies 511–592; the sequence is RTCTKVQMQG…MVKRIYIQKR (82 aa).

The protein belongs to the ARF family. As to quaternary structure, homodimers and heterodimers.

The protein localises to the nucleus. In terms of biological role, auxin response factors (ARFs) are transcriptional factors that bind specifically to the DNA sequence 5'-TGTCTC-3' found in the auxin-responsive promoter elements (AuxREs). Could act as transcriptional activator or repressor. Formation of heterodimers with Aux/IAA proteins may alter their ability to modulate early auxin response genes expression. This is Putative auxin response factor 15 (ARF15) from Arabidopsis thaliana (Mouse-ear cress).